Consider the following 1174-residue polypeptide: Probable DNA-directed RNA polymerase I subunit RPA2 (1174 aa).

Residues 1–16 (MSFQTLERERTFKNPP) show a composition bias toward basic and acidic residues. Residues 1–23 (MSFQTLERERTFKNPPKDGTSFP) form a disordered region. The C4-type zinc-finger motif lies at 1089–1118 (CRDCGSIISIMSTISMNGVGSASEVRCRSC).

This sequence belongs to the RNA polymerase beta chain family. As to quaternary structure, component of the RNA polymerase I (Pol I) complex consisting of 14 subunits.

The protein localises to the nucleus. It localises to the nucleolus. It catalyses the reaction RNA(n) + a ribonucleoside 5'-triphosphate = RNA(n+1) + diphosphate. Its function is as follows. DNA-dependent RNA polymerase catalyzes the transcription of DNA into RNA using the four ribonucleoside triphosphates as substrates. Second largest core component of RNA polymerase I which synthesizes ribosomal RNA precursors. Proposed to contribute to the polymerase catalytic activity and forms the polymerase active center together with the largest subunit. Pol I is composed of mobile elements and RPA2 is part of the core element with the central large cleft and probably a clamp element that moves to open and close the cleft. This chain is Probable DNA-directed RNA polymerase I subunit RPA2 (rpa2), found in Schizosaccharomyces pombe (strain 972 / ATCC 24843) (Fission yeast).